The following is a 348-amino-acid chain: Selenide, water dikinase (348 aa).

Cys-17 is a catalytic residue. ATP-binding positions include Lys-20 and 47 to 49 (RAD). Asp-50 contacts Mg(2+). Residues Asp-67, Asp-90, and 138 to 140 (GHT) contribute to the ATP site. A Mg(2+)-binding site is contributed by Asp-90. A Mg(2+)-binding site is contributed by Asp-226.

It belongs to the selenophosphate synthase 1 family. Class I subfamily. As to quaternary structure, homodimer. It depends on Mg(2+) as a cofactor.

It carries out the reaction hydrogenselenide + ATP + H2O = selenophosphate + AMP + phosphate + 2 H(+). In terms of biological role, synthesizes selenophosphate from selenide and ATP. This is Selenide, water dikinase from Pelobacter propionicus (strain DSM 2379 / NBRC 103807 / OttBd1).